A 483-amino-acid polypeptide reads, in one-letter code: MKFIIKLFPEITIKSQSVRLRFIKILTTNIRNVLKHLEDDTLAIVRHWDHIELRTKDDNLGPEICDALTRIPGIHHILEVEDRSYSDMHNIFEQTLEAYRETLVGKTFCVRVKRRGKHEFSSGDVERYVGGGLNQHIESAKVNLTRPQVTVNLEVDQDKLILVKARHEGLGGFPIGTQEDVLSLISGGFDSGVSSYMLMRRGCRVHYCFFNLGGSAHEIGVKQVAHYLWNRFGSSHRVRFIAIDFEPVVGEILEKVEDGQMGVVLKRMMVRAASQVAERYGVQALVTGEALGQVSSQTLTNLRLIDNASDTLILRPLISHDKEHIINLARQIGTEDFAKTMPEYCGVISKSPTVKAVKAKIEEEESHFDFSILDRVVSEAKNVDIREIAQQSREQVVEVETVAELADTDVLLDIRAPDEQEEKPLKLDQVEVRSLPFYKLSSQFADLDQSKTYLLYCDRGVMSRLQALYLREQGYTNVKVYRP.

Residues 62 to 166 (PEICDALTRI…QDKLILVKAR (105 aa)) form the THUMP domain. ATP-binding positions include 184–185 (LI), lysine 266, glycine 288, and glutamine 297. Cysteine 345 and cysteine 457 are disulfide-bonded. One can recognise a Rhodanese domain in the interval 405-483 (LADTDVLLDI…GYTNVKVYRP (79 aa)). Cysteine 457 (cysteine persulfide intermediate) is an active-site residue.

It belongs to the ThiI family.

It is found in the cytoplasm. It carries out the reaction [ThiI sulfur-carrier protein]-S-sulfanyl-L-cysteine + a uridine in tRNA + 2 reduced [2Fe-2S]-[ferredoxin] + ATP + H(+) = [ThiI sulfur-carrier protein]-L-cysteine + a 4-thiouridine in tRNA + 2 oxidized [2Fe-2S]-[ferredoxin] + AMP + diphosphate. It catalyses the reaction [ThiS sulfur-carrier protein]-C-terminal Gly-Gly-AMP + S-sulfanyl-L-cysteinyl-[cysteine desulfurase] + AH2 = [ThiS sulfur-carrier protein]-C-terminal-Gly-aminoethanethioate + L-cysteinyl-[cysteine desulfurase] + A + AMP + 2 H(+). It functions in the pathway cofactor biosynthesis; thiamine diphosphate biosynthesis. Functionally, catalyzes the ATP-dependent transfer of a sulfur to tRNA to produce 4-thiouridine in position 8 of tRNAs, which functions as a near-UV photosensor. Also catalyzes the transfer of sulfur to the sulfur carrier protein ThiS, forming ThiS-thiocarboxylate. This is a step in the synthesis of thiazole, in the thiamine biosynthesis pathway. The sulfur is donated as persulfide by IscS. The protein is tRNA sulfurtransferase of Yersinia pseudotuberculosis serotype O:1b (strain IP 31758).